The chain runs to 148 residues: Small ribosomal subunit protein uS9 (148 aa).

Belongs to the universal ribosomal protein uS9 family.

The polypeptide is Small ribosomal subunit protein uS9 (RpS16) (Drosophila melanogaster (Fruit fly)).